The following is a 467-amino-acid chain: Amino-acid permease RocE (467 aa).

12 helical membrane-spanning segments follow: residues 21–41, 47–67, 87–107, 122–142, 162–182, 207–227, 246–266, 283–303, 336–356, 361–381, 409–429, and 435–455; these read FMIS…GFTI, LGAV…MLCL, FISP…WAVT, WFPH…MFIL, ILII…LIDL, MLIT…IGVA, VWRT…MIPW, IGIP…LLSV, VPMY…LTKF, TVYM…WITI, YPVL…SLAF, and IALY…HVVI.

This sequence belongs to the amino acid-polyamine-organocation (APC) superfamily. Amino acid transporter (AAT) (TC 2.A.3.1) family.

The protein resides in the cell membrane. Functionally, putative transport protein involved in arginine degradative pathway. Probably transports arginine or ornithine. In Bacillus subtilis (strain 168), this protein is Amino-acid permease RocE.